Consider the following 749-residue polypeptide: Metabotropic glutamate receptor-like protein M (749 aa).

The first 22 residues, 1–22 (MIKLILSLIFLIICCNINPSES), serve as a signal peptide directing secretion. Residues 23–385 (FKLITLTTGP…KIEFSSSVQK (363 aa)) lie on the Extracellular side of the membrane. N-linked (GlcNAc...) asparagine glycans are attached at residues asparagine 67, asparagine 164, asparagine 257, asparagine 271, and asparagine 345. Residues 386 to 406 (GFSIVSGCLIAFVILMMVGIV) form a helical membrane-spanning segment. Over 407 to 419 (YYKDTPSIRSASP) the chain is Cytoplasmic. The chain crosses the membrane as a helical span at residues 420–440 (IFLNFSLIGGIIIYIGIIIWV). Topologically, residues 441–456 (GPISTHQCNARFWLVT) are extracellular. Residues 457–477 (LGFSTLIGSLVVKNFRIWLIF) traverse the membrane as a helical segment. Residues 478–492 (DNPELKAIKITNYQL) lie on the Cytoplasmic side of the membrane. A helical membrane pass occupies residues 493–513 (FPWVGLCLVINIVLMAILTSV). The Extracellular segment spans residues 514-544 (GDLKAIEAQGIDSLGKYEYMTVCKMNSAGAS). The chain crosses the membrane as a helical span at residues 545–565 (TLYSILAYFAALLLVGVFVSW). At 566–579 (KIRIVDIEEFNESK) the chain is on the cytoplasmic side. The helical transmembrane segment at 580-600 (AIANTLYAVSFCLFVIVPLMI) threads the bilayer. Residues 601–609 (SPQEKQSET) lie on the Extracellular side of the membrane. A helical transmembrane segment spans residues 610 to 630 (IILCVAGLFITTAALLIVFIP). The Cytoplasmic segment spans residues 631 to 749 (KFWRVFIYGK…EEPVKTESQE (119 aa)). The interval 658-749 (ARAESLSKNS…EEPVKTESQE (92 aa)) is disordered. Positions 698–716 (SSLSEPNKPTKNNDGNVNV) are enriched in polar residues. Acidic residues predominate over residues 725–740 (FTDDTISEFDENEVNE).

The protein in the N-terminal section; belongs to the BMP lipoprotein family. It in the C-terminal section; belongs to the G-protein coupled receptor 3 family. GABA-B receptor subfamily.

Its subcellular location is the membrane. This is Metabotropic glutamate receptor-like protein M (grlM) from Dictyostelium discoideum (Social amoeba).